A 118-amino-acid chain; its full sequence is Small ribosomal subunit protein uS12cz/uS12cy (118 aa).

The protein belongs to the universal ribosomal protein uS12 family. In terms of assembly, part of the 30S ribosomal subunit.

The protein resides in the plastid. Its subcellular location is the chloroplast. Functionally, with S4 and S5 plays an important role in translational accuracy. Located at the interface of the 30S and 50S subunits. The protein is Small ribosomal subunit protein uS12cz/uS12cy (rps12-A) of Helianthus annuus (Common sunflower).